The sequence spans 165 residues: UPF0303 protein Bphyt_1734 (165 aa).

It belongs to the UPF0303 family.

In Paraburkholderia phytofirmans (strain DSM 17436 / LMG 22146 / PsJN) (Burkholderia phytofirmans), this protein is UPF0303 protein Bphyt_1734.